A 138-amino-acid chain; its full sequence is Large ribosomal subunit protein uL16 (138 aa).

Basic residues predominate over residues 1–17 (MLIPRKVKHRKQHHPRQ). A disordered region spans residues 1–22 (MLIPRKVKHRKQHHPRQRGIAS).

The protein belongs to the universal ribosomal protein uL16 family. As to quaternary structure, part of the 50S ribosomal subunit.

Its function is as follows. Binds 23S rRNA and is also seen to make contacts with the A and possibly P site tRNAs. The chain is Large ribosomal subunit protein uL16 from Mycobacterium tuberculosis (strain ATCC 25177 / H37Ra).